Reading from the N-terminus, the 128-residue chain is Sulfurtransferase TusD (128 aa).

Cys78 (cysteine persulfide intermediate) is an active-site residue.

The protein belongs to the DsrE/TusD family. In terms of assembly, heterohexamer, formed by a dimer of trimers. The hexameric TusBCD complex contains 2 copies each of TusB, TusC and TusD. The TusBCD complex interacts with TusE.

It localises to the cytoplasm. Functionally, part of a sulfur-relay system required for 2-thiolation of 5-methylaminomethyl-2-thiouridine (mnm(5)s(2)U) at tRNA wobble positions. Accepts sulfur from TusA and transfers it in turn to TusE. The protein is Sulfurtransferase TusD of Citrobacter koseri (strain ATCC BAA-895 / CDC 4225-83 / SGSC4696).